We begin with the raw amino-acid sequence, 225 residues long: 2-C-methyl-D-erythritol 4-phosphate cytidylyltransferase (225 aa).

This sequence belongs to the IspD/TarI cytidylyltransferase family. IspD subfamily.

It catalyses the reaction 2-C-methyl-D-erythritol 4-phosphate + CTP + H(+) = 4-CDP-2-C-methyl-D-erythritol + diphosphate. Its pathway is isoprenoid biosynthesis; isopentenyl diphosphate biosynthesis via DXP pathway; isopentenyl diphosphate from 1-deoxy-D-xylulose 5-phosphate: step 2/6. Its function is as follows. Catalyzes the formation of 4-diphosphocytidyl-2-C-methyl-D-erythritol from CTP and 2-C-methyl-D-erythritol 4-phosphate (MEP). The sequence is that of 2-C-methyl-D-erythritol 4-phosphate cytidylyltransferase from Clostridium perfringens (strain SM101 / Type A).